The sequence spans 381 residues: Sterol 24-C-methyltransferase ERG6A (381 aa).

This sequence belongs to the class I-like SAM-binding methyltransferase superfamily. Erg6/SMT family.

It catalyses the reaction lanosterol + S-adenosyl-L-methionine = eburicol + S-adenosyl-L-homocysteine + H(+). Its pathway is steroid metabolism; ergosterol biosynthesis. Functionally, sterol 24-C-methyltransferase; part of the third module of ergosterol biosynthesis pathway that includes the late steps of the pathway. ERG6A and ERG6B methylate lanosterol at C-24 to produce eburicol. The third module or late pathway involves the ergosterol synthesis itself through consecutive reactions that mainly occur in the endoplasmic reticulum (ER) membrane. Firstly, the squalene synthase ERG9 catalyzes the condensation of 2 farnesyl pyrophosphate moieties to form squalene, which is the precursor of all steroids. Squalene synthase is crucial for balancing the incorporation of farnesyl diphosphate (FPP) into sterol and nonsterol isoprene synthesis. Secondly, squalene is converted into lanosterol by the consecutive action of the squalene epoxidase ERG1 and the lanosterol synthase ERG7. Then, the delta(24)-sterol C-methyltransferase ERG6 methylates lanosterol at C-24 to produce eburicol. Eburicol is the substrate of the sterol 14-alpha demethylase encoded by CYP51A, CYP51B and CYP51C, to yield 4,4,24-trimethyl ergosta-8,14,24(28)-trienol. CYP51B encodes the enzyme primarily responsible for sterol 14-alpha-demethylation, and plays an essential role in ascospore formation. CYP51A encodes an additional sterol 14-alpha-demethylase, induced on ergosterol depletion and responsible for the intrinsic variation in azole sensitivity. The third CYP51 isoform, CYP51C, does not encode a sterol 14-alpha-demethylase, but is required for full virulence on host wheat ears. The C-14 reductase ERG24 then reduces the C14=C15 double bond which leads to 4,4-dimethylfecosterol. A sequence of further demethylations at C-4, involving the C-4 demethylation complex containing the C-4 methylsterol oxidases ERG25, the sterol-4-alpha-carboxylate 3-dehydrogenase ERG26 and the 3-keto-steroid reductase ERG27, leads to the production of fecosterol via 4-methylfecosterol. ERG28 has a role as a scaffold to help anchor ERG25, ERG26 and ERG27 to the endoplasmic reticulum. The C-8 sterol isomerase ERG2 then catalyzes the reaction which results in unsaturation at C-7 in the B ring of sterols and thus converts fecosterol to episterol. The sterol-C5-desaturases ERG3A and ERG3BB then catalyze the introduction of a C-5 double bond in the B ring to produce 5-dehydroepisterol. The C-22 sterol desaturases ERG5A and ERG5B further convert 5-dehydroepisterol into ergosta-5,7,22,24(28)-tetraen-3beta-ol by forming the C-22(23) double bond in the sterol side chain. Finally, ergosta-5,7,22,24(28)-tetraen-3beta-ol is substrate of the C-24(28) sterol reductase ERG4 to produce ergosterol. In Gibberella zeae (strain ATCC MYA-4620 / CBS 123657 / FGSC 9075 / NRRL 31084 / PH-1) (Wheat head blight fungus), this protein is Sterol 24-C-methyltransferase ERG6A (FG02783.1).